The primary structure comprises 108 residues: Nucleoid-associated protein Rmet_2128 (108 aa).

Over residues T86 to S96 the composition is skewed to polar residues. The interval T86–F108 is disordered. Pro residues predominate over residues P99–F108.

Belongs to the YbaB/EbfC family. As to quaternary structure, homodimer.

Its subcellular location is the cytoplasm. The protein localises to the nucleoid. Functionally, binds to DNA and alters its conformation. May be involved in regulation of gene expression, nucleoid organization and DNA protection. This chain is Nucleoid-associated protein Rmet_2128, found in Cupriavidus metallidurans (strain ATCC 43123 / DSM 2839 / NBRC 102507 / CH34) (Ralstonia metallidurans).